Here is a 3797-residue protein sequence, read N- to C-terminus: A-kinase anchor protein 9 (3797 aa).

Positions 1–140 are disordered; the sequence is MEDEERQRKL…SSEQGAQSSQ (140 aa). 2 stretches are compositionally biased toward polar residues: residues 50–65 and 92–108; these read HTDQ…SSQR and EIST…NGCN. Residues 115 to 124 show a composition bias toward basic and acidic residues; it reads KPTDPLREEE. Ser-139 carries the post-translational modification Phosphoserine. 2 coiled-coil regions span residues 140-607 and 640-976; these read QTCL…LRTQ and IHYK…LLAN. Ser-1288 is modified (phosphoserine). 3 disordered regions span residues 1643–1668, 2323–2343, and 2419–2454; these read STQT…LERS, VVST…EESF, and SDNL…ASRT. Composition is skewed to basic and acidic residues over residues 1648–1668 and 2328–2343; these read DGHD…LERS and QQRE…EESF. The stretch at 1808 to 2377 forms a coiled coil; that stretch reads SRLQAAVEKL…MTHMNNVLKE (570 aa). Polar residues predominate over residues 2438 to 2454; sequence KQTSLTRLQESPEASRT. Residues 2498–2510 form a PKA-RII subunit binding domain region; that stretch reads DLQRSLEKFAAAL. Disordered stretches follow at residues 2604 to 2695 and 3271 to 3296; these read LEEA…SSSG and MEKD…QKKM. The span at 2606-2615 shows a compositional bias: acidic residues; that stretch reads EAEERPEEGG. The span at 2642–2669 shows a compositional bias: basic and acidic residues; sequence PLTEAKEKLSYSLEKEKRTGEQESREAP. A coiled-coil region spans residues 2975 to 3325; it reads LQKADRRSLL…QVYKLDLEGK (351 aa). A compositionally biased stretch (polar residues) spans 3279-3294; that stretch reads QKTLQTEQEANTQGQK. Phosphoserine is present on residues Ser-3732, Ser-3755, and Ser-3787.

As to quaternary structure, interacts with the regulatory region of protein kinase N (PKN), protein phosphatase 2A (PP2A), protein phosphatase 1 (PP1) and the immature non-phosphorylated form of PKC epsilon. Interacts with CIP4 and FNBP1. Interacts with chloride intracellular channel proteins CLIC1, CLIC4 and CLIC5. CSNK1D binding promotes its centrosomal subcellular location. Interacts with GM130/GOLGA2; leading to recruitment to the Golgi apparatus. Interacts with KCNQ1; targets protein kinase A (PKA) catalytic and regulatory subunits and protein phosphatase 1 (PP1), to the heterodimer KCNQ1-KCNE1. Interacts with PDE4DIP isoform 2; this interaction stabilizes both proteins. In complex with PDE4DIP isoform 2, recruits CAMSAP2 to the Golgi apparatus. Forms a pericentrosomal complex with CDK5RAP2, EB1/MAPRE1 and PDE4DIP isoform 2; within this complex, MAPRE1 binding to CDK5RAP2 may be mediated by PDE4DIP. Interacts with MAPRE1 and MAPRE3. Interacts (via C-terminus) with CAMSAP2; this interaction is much stronger in the presence of PDE4DIP isoform 2. Interacts with CAMSAP3. Interacts (via C-terminus) with the gamma-tubulin ring complex (gamma-TuRC), composed of gamma-tubulin, TUBGCP2, TUBGCP3, TUBGCP4, TUBGCP5 and TUBGCP6.

It localises to the golgi apparatus. It is found in the cytoplasm. Its subcellular location is the cytoskeleton. The protein localises to the microtubule organizing center. The protein resides in the centrosome. Scaffolding protein that assembles several protein kinases and phosphatases on the centrosome and Golgi apparatus. Required to maintain the integrity of the Golgi apparatus. Required for microtubule nucleation at the cis-side of the Golgi apparatus. Required for association of the centrosomes with the poles of the bipolar mitotic spindle during metaphase. In complex with PDE4DIP isoform 2/MMG8/SMYLE, recruits CAMSAP2 to the Golgi apparatus and tethers non-centrosomal minus-end microtubules to the Golgi, an important step for polarized cell movement. In complex with PDE4DIP isoform 2, EB1/MAPRE1 and CDK5RAP2, contributes to microtubules nucleation and extension also from the centrosome to the cell periphery. The chain is A-kinase anchor protein 9 (Akap9) from Mus musculus (Mouse).